The primary structure comprises 322 residues: Solute carrier family 25 member 16 (322 aa).

Solcar repeat units follow at residues 34–120 (FYWL…YKTF), 128–219 (SGHV…LKSV), and 241–322 (LKTH…AVAF).

The protein belongs to the mitochondrial carrier (TC 2.A.29) family.

It is found in the mitochondrion inner membrane. Its function is as follows. May be involved in the transport of coenzyme A in the mitochondrial matrix. Very little is known about the physiological function of this carrier. This Rattus norvegicus (Rat) protein is Solute carrier family 25 member 16.